Consider the following 306-residue polypeptide: Ribosomal protein L11 methyltransferase (306 aa).

S-adenosyl-L-methionine-binding residues include Thr-154, Gly-179, Asp-201, and Asn-242.

This sequence belongs to the methyltransferase superfamily. PrmA family.

It localises to the cytoplasm. The enzyme catalyses L-lysyl-[protein] + 3 S-adenosyl-L-methionine = N(6),N(6),N(6)-trimethyl-L-lysyl-[protein] + 3 S-adenosyl-L-homocysteine + 3 H(+). In terms of biological role, methylates ribosomal protein L11. This is Ribosomal protein L11 methyltransferase from Stenotrophomonas maltophilia (strain R551-3).